Reading from the N-terminus, the 140-residue chain is L-fucose mutarotase (140 aa).

H22 acts as the Proton donor in catalysis. Residues D30, R107, and 129–131 each bind substrate; that span reads YGN.

It belongs to the RbsD / FucU family. FucU mutarotase subfamily. As to quaternary structure, homodecamer.

The protein resides in the cytoplasm. The enzyme catalyses alpha-L-fucose = beta-L-fucose. It participates in carbohydrate metabolism; L-fucose metabolism. Involved in the anomeric conversion of L-fucose. In Shigella boydii serotype 18 (strain CDC 3083-94 / BS512), this protein is L-fucose mutarotase.